Reading from the N-terminus, the 175-residue chain is Small ribosomal subunit protein uS5 (175 aa).

The S5 DRBM domain occupies 11-74 (LSEVLVDVNR…QAAKKRMMKV (64 aa)).

It belongs to the universal ribosomal protein uS5 family. Part of the 30S ribosomal subunit. Contacts proteins S4 and S8.

In terms of biological role, with S4 and S12 plays an important role in translational accuracy. Functionally, located at the back of the 30S subunit body where it stabilizes the conformation of the head with respect to the body. The chain is Small ribosomal subunit protein uS5 from Rickettsia typhi (strain ATCC VR-144 / Wilmington).